We begin with the raw amino-acid sequence, 61 residues long: Large ribosomal subunit protein uL29 (61 aa).

Belongs to the universal ribosomal protein uL29 family.

This is Large ribosomal subunit protein uL29 from Xanthomonas campestris pv. campestris (strain 8004).